We begin with the raw amino-acid sequence, 492 residues long: Protein nucleotidyltransferase YdiU (492 aa).

ATP-binding residues include Gly-91, Gly-93, Arg-94, Lys-114, Asp-126, Gly-127, Arg-177, and Arg-184. Asp-253 (proton acceptor) is an active-site residue. Positions 254 and 263 each coordinate Mg(2+). Asp-263 is a binding site for ATP.

The protein belongs to the SELO family. Requires Mg(2+) as cofactor. The cofactor is Mn(2+).

It catalyses the reaction L-seryl-[protein] + ATP = 3-O-(5'-adenylyl)-L-seryl-[protein] + diphosphate. The catalysed reaction is L-threonyl-[protein] + ATP = 3-O-(5'-adenylyl)-L-threonyl-[protein] + diphosphate. The enzyme catalyses L-tyrosyl-[protein] + ATP = O-(5'-adenylyl)-L-tyrosyl-[protein] + diphosphate. It carries out the reaction L-histidyl-[protein] + UTP = N(tele)-(5'-uridylyl)-L-histidyl-[protein] + diphosphate. It catalyses the reaction L-seryl-[protein] + UTP = O-(5'-uridylyl)-L-seryl-[protein] + diphosphate. The catalysed reaction is L-tyrosyl-[protein] + UTP = O-(5'-uridylyl)-L-tyrosyl-[protein] + diphosphate. Nucleotidyltransferase involved in the post-translational modification of proteins. It can catalyze the addition of adenosine monophosphate (AMP) or uridine monophosphate (UMP) to a protein, resulting in modifications known as AMPylation and UMPylation. This is Protein nucleotidyltransferase YdiU from Maridesulfovibrio salexigens (strain ATCC 14822 / DSM 2638 / NCIMB 8403 / VKM B-1763) (Desulfovibrio salexigens).